The primary structure comprises 1141 residues: DNA-directed RNA polymerase subunit beta (1141 aa).

This sequence belongs to the RNA polymerase beta chain family. As to quaternary structure, the RNAP catalytic core consists of 2 alpha, 1 beta, 1 beta' and 1 omega subunit. When a sigma factor is associated with the core the holoenzyme is formed, which can initiate transcription.

The enzyme catalyses RNA(n) + a ribonucleoside 5'-triphosphate = RNA(n+1) + diphosphate. Functionally, DNA-dependent RNA polymerase catalyzes the transcription of DNA into RNA using the four ribonucleoside triphosphates as substrates. The chain is DNA-directed RNA polymerase subunit beta from Parafrankia sp. (strain EAN1pec).